Reading from the N-terminus, the 461-residue chain is uncharacterized protein (461 aa).

The next 13 helical transmembrane spans lie at 13–33, 54–74, 81–101, 120–140, 170–190, 211–231, 256–276, 286–306, 314–334, 349–369, 377–397, 399–419, and 439–459; these read GIIF…LPFE, ALHV…LGLV, VGFA…ATAL, GNLF…SMWM, VFVL…TLVG, YGLP…YIIF, FIIF…NPFI, IASF…STGV, SNTD…SAVL, FMID…FIIF, TASA…LGMP, IGLA…PVAT, and VGFL…YMFW.

The protein belongs to the SLC13A/DASS transporter (TC 2.A.47) family. NADC subfamily.

The protein localises to the cell membrane. This is an uncharacterized protein from Haemophilus influenzae (strain ATCC 51907 / DSM 11121 / KW20 / Rd).